The following is a 222-amino-acid chain: MNPDIKICGLKTPEAMDRALERGATHVGFIFFEKSPRYIEPDLAGKLAERARGKAKIVAVTVNPTNDDLDEIISLVRPDILQLHGNESPERVLTIKAVYNLPVMKAMSVRDADDLKRVEAYIGIADRFLFDAKPPAGSELPGGNGVSFDWSLMSWLDDRVDYMLSGGVNKDNFAQALASTRATGIDLSSGVESAPGVKDPKKIDEFFDAVAEACLPEPAAGS.

The protein belongs to the TrpF family.

It catalyses the reaction N-(5-phospho-beta-D-ribosyl)anthranilate = 1-(2-carboxyphenylamino)-1-deoxy-D-ribulose 5-phosphate. The protein operates within amino-acid biosynthesis; L-tryptophan biosynthesis; L-tryptophan from chorismate: step 3/5. This chain is N-(5'-phosphoribosyl)anthranilate isomerase, found in Rhizobium rhizogenes (strain K84 / ATCC BAA-868) (Agrobacterium radiobacter).